The chain runs to 692 residues: Eomesodermin (692 aa).

The disordered stretch occupies residues 35–135 (NSSTPNLPHT…LNTAVPTSAP (101 aa)). Residues 263–443 (LWLKFHRHQT…HNPFAKGFRD (181 aa)) constitute a DNA-binding region (T-box). Residues 578 to 692 (SMAGWGSRGS…LGYYSFYSSS (115 aa)) form a required for transcription activation region. Disordered stretches follow at residues 595-614 (TSLP…DLLP) and 621-673 (EMSS…DIGT). Low complexity-rich tracts occupy residues 596–609 (SLPW…SGFS) and 654–665 (SPSTSSNENSPP).

It is found in the nucleus. Its function is as follows. Functions as a transcriptional activator playing a crucial role during development. Functions in gastrulation, regulating mesoderm differentiation. Activates wnt8, t/bra, chrd and mix-A/mix.1 expression. The protein is Eomesodermin (eomes) of Xenopus laevis (African clawed frog).